Reading from the N-terminus, the 336-residue chain is Biotin synthase (336 aa).

The Radical SAM core domain maps to 36–263 (TKVQISTLLS…ESHVRLAAGR (228 aa)). The [4Fe-4S] cluster site is built by Cys51, Cys55, and Cys58. Residues Cys95, Cys126, Cys186, and Arg258 each contribute to the [2Fe-2S] cluster site.

The protein belongs to the radical SAM superfamily. Biotin synthase family. Homodimer. [4Fe-4S] cluster serves as cofactor. The cofactor is [2Fe-2S] cluster.

It catalyses the reaction (4R,5S)-dethiobiotin + (sulfur carrier)-SH + 2 reduced [2Fe-2S]-[ferredoxin] + 2 S-adenosyl-L-methionine = (sulfur carrier)-H + biotin + 2 5'-deoxyadenosine + 2 L-methionine + 2 oxidized [2Fe-2S]-[ferredoxin]. The protein operates within cofactor biosynthesis; biotin biosynthesis; biotin from 7,8-diaminononanoate: step 2/2. Functionally, catalyzes the conversion of dethiobiotin (DTB) to biotin by the insertion of a sulfur atom into dethiobiotin via a radical-based mechanism. The polypeptide is Biotin synthase (Gluconobacter oxydans (strain 621H) (Gluconobacter suboxydans)).